We begin with the raw amino-acid sequence, 432 residues long: Anaerobic glycerol-3-phosphate dehydrogenase subunit B (432 aa).

Belongs to the anaerobic G-3-P dehydrogenase subunit B family. Composed of a catalytic GlpA/B dimer and of membrane bound GlpC. The cofactor is FMN.

It carries out the reaction a quinone + sn-glycerol 3-phosphate = dihydroxyacetone phosphate + a quinol. The protein operates within polyol metabolism; glycerol degradation via glycerol kinase pathway; glycerone phosphate from sn-glycerol 3-phosphate (anaerobic route): step 1/1. Conversion of glycerol 3-phosphate to dihydroxyacetone. Uses fumarate or nitrate as electron acceptor. In Haemophilus influenzae (strain 86-028NP), this protein is Anaerobic glycerol-3-phosphate dehydrogenase subunit B.